Here is a 450-residue protein sequence, read N- to C-terminus: tRNA modification GTPase MnmE (450 aa).

Residues arginine 20, glutamate 78, and lysine 117 each contribute to the (6S)-5-formyl-5,6,7,8-tetrahydrofolate site. A TrmE-type G domain is found at 211 to 372 (GLRMVIVGKP…LEESIYRETQ (162 aa)). Asparagine 221 contributes to the K(+) binding site. GTP contacts are provided by residues 221–226 (NVGKST), 240–246 (TDIPGTT), and 265–268 (DTAG). Serine 225 provides a ligand contact to Mg(2+). K(+) is bound by residues threonine 240, isoleucine 242, and threonine 245. A Mg(2+)-binding site is contributed by threonine 246. A (6S)-5-formyl-5,6,7,8-tetrahydrofolate-binding site is contributed by lysine 450.

The protein belongs to the TRAFAC class TrmE-Era-EngA-EngB-Septin-like GTPase superfamily. TrmE GTPase family. In terms of assembly, homodimer. Heterotetramer of two MnmE and two MnmG subunits. It depends on K(+) as a cofactor.

Its subcellular location is the cytoplasm. Exhibits a very high intrinsic GTPase hydrolysis rate. Involved in the addition of a carboxymethylaminomethyl (cmnm) group at the wobble position (U34) of certain tRNAs, forming tRNA-cmnm(5)s(2)U34. The protein is tRNA modification GTPase MnmE of Thermotoga sp. (strain RQ2).